A 355-amino-acid chain; its full sequence is Uroporphyrinogen decarboxylase (355 aa).

Substrate contacts are provided by residues 27-31, Asp-78, Tyr-155, Ser-210, and His-328; that span reads RQAGR.

Belongs to the uroporphyrinogen decarboxylase family. In terms of assembly, homodimer.

It localises to the cytoplasm. The enzyme catalyses uroporphyrinogen III + 4 H(+) = coproporphyrinogen III + 4 CO2. Its pathway is porphyrin-containing compound metabolism; protoporphyrin-IX biosynthesis; coproporphyrinogen-III from 5-aminolevulinate: step 4/4. Its function is as follows. Catalyzes the decarboxylation of four acetate groups of uroporphyrinogen-III to yield coproporphyrinogen-III. The sequence is that of Uroporphyrinogen decarboxylase from Pseudomonas aeruginosa (strain LESB58).